The sequence spans 198 residues: Probable minor pilin MMP0709 (198 aa).

Positions 1–5 (MSNRG) are excised as a propeptide. The short motif at 6-14 (QLSIEMVIL) is the QXSXEXXXL element.

Post-translationally, the N-terminus is probably cleaved by the prepilin peptidase EppA, which recognizes the class III signal sequence.

Its subcellular location is the secreted. It localises to the cell surface. The protein localises to the fimbrium. This Methanococcus maripaludis (strain DSM 14266 / JCM 13030 / NBRC 101832 / S2 / LL) protein is Probable minor pilin MMP0709.